A 566-amino-acid polypeptide reads, in one-letter code: Chaperone Ric-8 (566 aa).

The protein belongs to the synembryn family. In terms of assembly, interacts with GDP-bound G(i)-alpha protein. Does not interact with G-alpha proteins when they are in complex with subunits beta and gamma. Interacts with Frq2 in a Ca(2+)-independent manner but does not interact with Frq1.

The protein localises to the cytoplasm. It localises to the cell cortex. The protein resides in the presynapse. Chaperone that specifically binds and folds some, but not all, nascent G alpha proteins prior to G protein heterotrimer formation, promoting their stability and activity. Also acts as a guanine nucleotide exchange factor (GEF) for G alpha proteins by stimulating exchange of bound GDP for free GTP. Plays a key role in asymmetric spindle positioning, a step for asymmetric cell division that generates cell diversity during development by activating G(i) alpha protein independently of G-protein coupled receptors. Required during gastrulation and sensory organ precursor (SOP) formation. Plays a role in positively regulating synapse number and neurotransmitter release. The polypeptide is Chaperone Ric-8 (ric8a) (Drosophila pseudoobscura pseudoobscura (Fruit fly)).